The following is a 305-amino-acid chain: Ribosomal RNA small subunit methyltransferase H (305 aa).

Residues 47-49, D66, F93, D108, and Q115 each bind S-adenosyl-L-methionine; that span reads GGH. Residues 279–305 form a disordered region; sequence ADSNEKLNNPRSRSAKLRLAKKRNPNE. Over residues 291-305 the composition is skewed to basic residues; sequence RSAKLRLAKKRNPNE.

It belongs to the methyltransferase superfamily. RsmH family.

Its subcellular location is the cytoplasm. The enzyme catalyses cytidine(1402) in 16S rRNA + S-adenosyl-L-methionine = N(4)-methylcytidine(1402) in 16S rRNA + S-adenosyl-L-homocysteine + H(+). In terms of biological role, specifically methylates the N4 position of cytidine in position 1402 (C1402) of 16S rRNA. This is Ribosomal RNA small subunit methyltransferase H from Prochlorococcus marinus (strain SARG / CCMP1375 / SS120).